The sequence spans 427 residues: Serine--tRNA ligase (427 aa).

Position 228–230 (228–230) interacts with L-serine; that stretch reads TSE. 259-261 is a binding site for ATP; sequence RSE. Residue glutamate 282 participates in L-serine binding. Residue 346 to 349 coordinates ATP; sequence EISS. Serine 384 is a binding site for L-serine.

It belongs to the class-II aminoacyl-tRNA synthetase family. Type-1 seryl-tRNA synthetase subfamily. Homodimer. The tRNA molecule binds across the dimer.

It localises to the cytoplasm. The catalysed reaction is tRNA(Ser) + L-serine + ATP = L-seryl-tRNA(Ser) + AMP + diphosphate + H(+). It catalyses the reaction tRNA(Sec) + L-serine + ATP = L-seryl-tRNA(Sec) + AMP + diphosphate + H(+). It participates in aminoacyl-tRNA biosynthesis; selenocysteinyl-tRNA(Sec) biosynthesis; L-seryl-tRNA(Sec) from L-serine and tRNA(Sec): step 1/1. In terms of biological role, catalyzes the attachment of serine to tRNA(Ser). Is also able to aminoacylate tRNA(Sec) with serine, to form the misacylated tRNA L-seryl-tRNA(Sec), which will be further converted into selenocysteinyl-tRNA(Sec). The chain is Serine--tRNA ligase from Ehrlichia ruminantium (strain Welgevonden).